A 479-amino-acid polypeptide reads, in one-letter code: Poly(A) polymerase catalytic subunit (479 aa).

Active-site residues include Asp-202 and Asp-204. 3 residues coordinate Ca(2+): Asp-202, Asp-204, and Asp-253.

The protein belongs to the poxviridae poly(A) polymerase catalytic subunit family. Heterodimer of a large (catalytic) subunit and a small (regulatory) subunit.

It catalyses the reaction RNA(n) + ATP = RNA(n)-3'-adenine ribonucleotide + diphosphate. Functionally, polymerase that creates the 3'-poly(A) tail of mRNA's. The protein is Poly(A) polymerase catalytic subunit (OPG063) of Homo sapiens (Human).